The following is an 88-amino-acid chain: Cell division topological specificity factor (88 aa).

Belongs to the MinE family.

Prevents the cell division inhibition by proteins MinC and MinD at internal division sites while permitting inhibition at polar sites. This ensures cell division at the proper site by restricting the formation of a division septum at the midpoint of the long axis of the cell. The polypeptide is Cell division topological specificity factor (Cronobacter sakazakii (strain ATCC BAA-894) (Enterobacter sakazakii)).